We begin with the raw amino-acid sequence, 238 residues long: Complement C1q-like protein 4 (238 aa).

The N-terminal stretch at 1-15 (MVLLLLVAIPLLVHS) is a signal peptide. Residues 36 to 101 (GPRGPGPDGA…PPGPGPGGVA (66 aa)) form a disordered region. The Collagen-like domain maps to 53–96 (PPGAKGEVGRRGKAGLRGPPGPPGPRGPPGEPGRPGPPGPPGPG). Positions 71–96 (PPGPPGPRGPPGEPGRPGPPGPPGPG) are enriched in pro residues. The region spanning 105-238 (GYVPRIAFYA…TFSGFIIYPD (134 aa)) is the C1q domain.

As to quaternary structure, forms homooligomers, predominantly dimers or trimers. Forms heterooligomers with C1QL1, C1QL2 and C1QL3, when proteins are coexpressed; this interaction does not occur after secretion. Interacts with ADGRB3. As to expression, highest expression levels in testis and adipose tissue, lower levels in skeletal muscle and kidney.

The protein resides in the secreted. Functionally, may regulate the number of excitatory synapses that are formed on hippocampus neurons. Has no effect on inhibitory synapses. May inhibit adipocyte differentiation at an early stage of the process. This Homo sapiens (Human) protein is Complement C1q-like protein 4 (C1QL4).